The primary structure comprises 349 residues: 3'-5' exoribonuclease 1 (349 aa).

Basic and acidic residues-rich tracts occupy residues 1–10 (MEDPQSKEPA) and 22–35 (PRPE…RPSP). The tract at residues 1–48 (MEDPQSKEPAGEAVALALLESPRPEGGEEPPRPSPEETQQCKFDGQET) is disordered. Residues Ser-59 and Ser-62 each carry the phosphoserine modification. The 35-residue stretch at 76 to 110 (INRMSKEELRAKLSEFKLETRGVKDVLKKRLKNYY) folds into the SAP domain. Positions 130–306 (ICIIDFEATC…DDSKNIARIA (177 aa)) constitute an Exonuclease domain. The Mg(2+) site is built by Asp-134 and Glu-136. Glu-136 acts as the Proton acceptor in catalysis. Residues Glu-136 and Ala-137 each coordinate AMP. Asp-234 lines the Mg(2+) pocket. His-293 acts as the Proton acceptor in catalysis. His-293 is a binding site for AMP. Asp-298 is a Mg(2+) binding site.

In terms of assembly, identified in a histone pre-mRNA complex, at least composed of ERI1, LSM11, SLBP, SNRPB, SYNCRIP and YBX1. Interacts in a cooperative manner with SLBP to the mature 3'-end of histone mRNAs. Binds to 40S and 60S ribosomal subunits and to 80S assembled ribosomes. Found in a ternary complex with SLBP and the stem-loop structure of the 3'-end of histone mRNAs. It depends on Mg(2+) as a cofactor.

The protein localises to the cytoplasm. It localises to the nucleus. It is found in the nucleolus. The catalysed reaction is Exonucleolytic cleavage in the 3'- to 5'-direction to yield nucleoside 5'-phosphates.. With respect to regulation, although it can bind simultaneously with SLBP to the 3'-end of histone mRNA, the presence of SLBP prevents the exonuclease activity. Functionally, RNA exonuclease that binds to the 3'-end of histone mRNAs and degrades them, suggesting that it plays an essential role in histone mRNA decay after replication. A 2' and 3'-hydroxyl groups at the last nucleotide of the histone 3'-end is required for efficient 3'-end histone mRNA exonuclease activity and degradation of RNA substrates. Also able to degrade the 3'-overhangs of short interfering RNAs (siRNAs) in vitro, suggesting a possible role as regulator of RNA interference (RNAi). Required for binding the 5'-ACCCA-3' sequence present in stem-loop structure. Able to bind other mRNAs. Required for 5.8S rRNA 3'-end processing. Also binds to 5.8s ribosomal RNA. Binds with high affinity to the stem-loop structure of replication-dependent histone pre-mRNAs. In vitro, does not have sequence specificity. In vitro, has weak DNA exonuclease activity. In vitro, shows biphasic kinetics such that there is rapid hydrolysis of the last three unpaired RNA nucleotides in the 39 flanking sequence followed by a much slower cleavage through the stem that occurs over a longer incubation period in the order of hours. ERI1-mediated RNA metabolism plays a key role in chondrogenesis. This Homo sapiens (Human) protein is 3'-5' exoribonuclease 1.